The following is a 427-amino-acid chain: 3-phosphoshikimate 1-carboxyvinyltransferase (427 aa).

3-phosphoshikimate contacts are provided by K20, S21, and R25. K20 provides a ligand contact to phosphoenolpyruvate. Positions 92 and 120 each coordinate phosphoenolpyruvate. 3-phosphoshikimate is bound by residues S166, Q168, D312, and K339. Q168 contributes to the phosphoenolpyruvate binding site. The active-site Proton acceptor is the D312. Phosphoenolpyruvate contacts are provided by R343 and R385.

The protein belongs to the EPSP synthase family. Monomer.

It is found in the cytoplasm. It catalyses the reaction 3-phosphoshikimate + phosphoenolpyruvate = 5-O-(1-carboxyvinyl)-3-phosphoshikimate + phosphate. The protein operates within metabolic intermediate biosynthesis; chorismate biosynthesis; chorismate from D-erythrose 4-phosphate and phosphoenolpyruvate: step 6/7. Its function is as follows. Catalyzes the transfer of the enolpyruvyl moiety of phosphoenolpyruvate (PEP) to the 5-hydroxyl of shikimate-3-phosphate (S3P) to produce enolpyruvyl shikimate-3-phosphate and inorganic phosphate. In Streptococcus sanguinis (strain SK36), this protein is 3-phosphoshikimate 1-carboxyvinyltransferase.